A 527-amino-acid chain; its full sequence is Endogenous retrovirus group FC1 member 1 Env polyprotein (527 aa).

Residues 1-411 (MNSPCDRLQQ…EPRPQNKSKW (411 aa)) form a surface protein region. Positions 280 to 283 (CFLC) match the CXXC motif. Residues 412 to 432 (AIFLPLVLGISLASSLVASGL) form a fusion peptide region. The tract at residues 412-527 (AIFLPLVLGI…LKKKKSSKRS (116 aa)) is transmembrane protein. Positions 477–493 (AQNRQALDLLMAEKGRT) match the CKS-17 motif. A disulfide bridge links cysteine 494 with cysteine 501. Residues 494 to 502 (CLFLQEECC) carry the CX6CC motif.

The protein belongs to the gamma type-C retroviral envelope protein family. HERV class-I F(c)2 env subfamily. Post-translationally, the CXXC motif is highly conserved across a broad range of retroviral envelope proteins. It is thought to participate in the formation of a labile disulfide bond possibly with the CX6CC motif present in the transmembrane domain. In terms of tissue distribution, low expression in skin and testis.

Its subcellular location is the virion. Functionally, retroviral envelope proteins mediate receptor recognition and membrane fusion during early infection. Endogenous envelope proteins may have kept, lost or modified their original function during evolution. This endogenous envelope protein has lost its original fusogenic properties. This is Endogenous retrovirus group FC1 member 1 Env polyprotein (ERVFC1-1) from Homo sapiens (Human).